Reading from the N-terminus, the 348-residue chain is Dihydroorotase (348 aa).

2 residues coordinate Zn(2+): His-17 and His-19. Residues 19–21 (HLR) and Asn-45 each bind substrate. Lys-103, His-140, and His-178 together coordinate Zn(2+). Lys-103 carries the N6-carboxylysine modification. Residue His-140 coordinates substrate. Leu-223 contacts substrate. Zn(2+) is bound at residue Asp-251. Residue Asp-251 is part of the active site. 2 residues coordinate substrate: His-255 and Ala-267.

This sequence belongs to the metallo-dependent hydrolases superfamily. DHOase family. Class II DHOase subfamily. Homodimer. Requires Zn(2+) as cofactor.

The enzyme catalyses (S)-dihydroorotate + H2O = N-carbamoyl-L-aspartate + H(+). It participates in pyrimidine metabolism; UMP biosynthesis via de novo pathway; (S)-dihydroorotate from bicarbonate: step 3/3. Functionally, catalyzes the reversible cyclization of carbamoyl aspartate to dihydroorotate. The polypeptide is Dihydroorotase (Escherichia coli O157:H7).